We begin with the raw amino-acid sequence, 951 residues long: Serine/threonine-protein kinase 10 (951 aa).

In terms of domain architecture, Protein kinase spans Trp-36 to Val-294. ATP contacts are provided by residues Leu-42–Val-50 and Lys-65. Asp-157 acts as the Proton acceptor in catalysis. Residues Glu-319 to Ser-330 show a composition bias toward acidic residues. Residues Glu-319–Ser-479 form a disordered region. A compositionally biased stretch (polar residues) spans Asp-331–Ala-343. A compositionally biased stretch (basic and acidic residues) spans Gly-345 to Val-356. The span at Pro-364–Ile-373 shows a compositional bias: polar residues. Basic and acidic residues-rich tracts occupy residues His-374–Val-394 and His-410–Gly-427. The span at Ala-429 to Arg-443 shows a compositional bias: polar residues. Phosphoserine; by PLK1 is present on residues Ser-483, Ser-487, and Ser-491. A coiled-coil region spans residues Glu-583 to Arg-723. The segment covering Gln-785–Thr-800 has biased composition (basic and acidic residues). The interval Gln-785 to Met-804 is disordered. A coiled-coil region spans residues Arg-898 to Glu-928. Positions Ala-930–Ser-951 are disordered.

Belongs to the protein kinase superfamily. STE Ser/Thr protein kinase family. STE20 subfamily. As to quaternary structure, homodimer. Post-translationally, autophosphorylates. Phosphorylated by plk1/plx1, suggesting the existence of a feedback loop with plk1/plx1. activation of the protein.

It localises to the cell membrane. It carries out the reaction L-seryl-[protein] + ATP = O-phospho-L-seryl-[protein] + ADP + H(+). The catalysed reaction is L-threonyl-[protein] + ATP = O-phospho-L-threonyl-[protein] + ADP + H(+). May act as a polo kinase kinase by mediating phosphorylation of plk1/plx1 and subsequent activation of plk1/plx1 during oocyte maturation. The sequence is that of Serine/threonine-protein kinase 10 (stk10) from Xenopus tropicalis (Western clawed frog).